The following is a 652-amino-acid chain: Tetracycline resistance protein TetP (652 aa).

Residues 2–252 (KKIINIGIVA…CSYFPFASND (251 aa)) enclose the tr-type G domain. GTP is bound by residues 11–18 (AHVDAGKT), 75–79 (DTPGH), and 129–132 (NKLD).

This sequence belongs to the TRAFAC class translation factor GTPase superfamily. Classic translation factor GTPase family. TetM/TetO subfamily.

Functionally, abolishes the inhibitory effect of tetracyclin on protein synthesis by a non-covalent modification of the ribosomes. The sequence is that of Tetracycline resistance protein TetP (tetP) from Clostridium perfringens.